Here is a 320-residue protein sequence, read N- to C-terminus: ATP synthase gamma chain (320 aa).

It belongs to the ATPase gamma chain family. In terms of assembly, F-type ATPases have 2 components, CF(1) - the catalytic core - and CF(0) - the membrane proton channel. CF(1) has five subunits: alpha(3), beta(3), gamma(1), delta(1), epsilon(1). CF(0) has three main subunits: a, b and c.

It localises to the cell membrane. Produces ATP from ADP in the presence of a proton gradient across the membrane. The gamma chain is believed to be important in regulating ATPase activity and the flow of protons through the CF(0) complex. In Lactobacillus delbrueckii subsp. bulgaricus (strain ATCC 11842 / DSM 20081 / BCRC 10696 / JCM 1002 / NBRC 13953 / NCIMB 11778 / NCTC 12712 / WDCM 00102 / Lb 14), this protein is ATP synthase gamma chain.